Consider the following 30-residue polypeptide: Platelet factor 4 (30 aa).

This sequence belongs to the intercrine alpha (chemokine CxC) family. As to quaternary structure, homotetramer. Interacts with TNFAIP6 (via Link domain). Interacts with CCR1. Interacts with CXCR3. In terms of processing, binds non-covalently to a proteoglycan molecule.

Its subcellular location is the secreted. Chemokine released during platelet aggregation that plays a role in different biological processes including hematopoiesis, cell proliferation, differentiation, and activation. Acts via different functional receptors including CCR1, CXCR3A or CXCR3B. Upon interaction with CXCR3A receptor, induces activated T-lymphocytes migration mediated via downstream Ras/extracellular signal-regulated kinase (ERK) signaling. Neutralizes the anticoagulant effect of heparin by binding more strongly to heparin than to the chondroitin-4-sulfate chains of the carrier molecule. Plays a role in the inhibition of hematopoiesis and in the maintenance of hematopoietic stem cell (HSC) quiescence. Chemotactic for neutrophils and monocytes via CCR1. Inhibits endothelial cell proliferation. In cooperation with toll-like receptor 8/TLR8, induces chromatin remodeling and activates inflammatory gene expression via the TBK1-IRF5 axis. In addition, induces myofibroblast differentiation and collagen synthesis in different precursor cells, including endothelial cells, by stimulating endothelial-to-mesenchymal transition. The sequence is that of Platelet factor 4 (PF4) from Oryctolagus cuniculus (Rabbit).